Consider the following 448-residue polypeptide: Methylenetetrahydrofolate--tRNA-(uracil-5-)-methyltransferase TrmFO (448 aa).

13–18 is a binding site for FAD; sequence GAGLAG.

This sequence belongs to the MnmG family. TrmFO subfamily. Requires FAD as cofactor.

The protein localises to the cytoplasm. It carries out the reaction uridine(54) in tRNA + (6R)-5,10-methylene-5,6,7,8-tetrahydrofolate + NADH + H(+) = 5-methyluridine(54) in tRNA + (6S)-5,6,7,8-tetrahydrofolate + NAD(+). The catalysed reaction is uridine(54) in tRNA + (6R)-5,10-methylene-5,6,7,8-tetrahydrofolate + NADPH + H(+) = 5-methyluridine(54) in tRNA + (6S)-5,6,7,8-tetrahydrofolate + NADP(+). Its function is as follows. Catalyzes the folate-dependent formation of 5-methyl-uridine at position 54 (M-5-U54) in all tRNAs. The polypeptide is Methylenetetrahydrofolate--tRNA-(uracil-5-)-methyltransferase TrmFO (Streptococcus pyogenes serotype M5 (strain Manfredo)).